The sequence spans 424 residues: Phosphoribosylamine--glycine ligase (424 aa).

An ATP-grasp domain is found at 107 to 313 (KTFMKKYGIP…FLETLLNFYE (207 aa)). 133 to 194 (VEKVGAPIVV…EEFLEGEEAS (62 aa)) provides a ligand contact to ATP. Glutamate 283 and asparagine 285 together coordinate Mg(2+).

The protein belongs to the GARS family. It depends on Mg(2+) as a cofactor. Mn(2+) serves as cofactor.

It catalyses the reaction 5-phospho-beta-D-ribosylamine + glycine + ATP = N(1)-(5-phospho-beta-D-ribosyl)glycinamide + ADP + phosphate + H(+). It functions in the pathway purine metabolism; IMP biosynthesis via de novo pathway; N(1)-(5-phospho-D-ribosyl)glycinamide from 5-phospho-alpha-D-ribose 1-diphosphate: step 2/2. The chain is Phosphoribosylamine--glycine ligase from Aquifex aeolicus (strain VF5).